Consider the following 222-residue polypeptide: Sigma non-opioid intracellular receptor 1 (222 aa).

The Lumenal segment spans residues 1 to 7; the sequence is MGVAGPW. Residues 8–29 form a helical membrane-spanning segment; the sequence is VLRVGLGLGAFALLLQGLRGWL. At 30-222 the chain is on the cytoplasmic side; it reads ACKRYEFQPA…ASAFFSTLGC (193 aa). The tract at residues 98–105 is important for ligand-binding; the sequence is SLTEYVLL. Positions 176–222 are C-terminal hydrophobic region; it reads FVPSTLAFALADTLFSTQDFITLFYTLRAYTKGLLLEASAFFSTLGC.

It belongs to the ERG2 family. Homotrimer.

Its subcellular location is the nucleus inner membrane. It localises to the nucleus outer membrane. It is found in the nucleus envelope. The protein resides in the cytoplasmic vesicle. The protein localises to the endoplasmic reticulum membrane. Its subcellular location is the membrane. Functionally, may function in lipid transport from the endoplasmic reticulum and be involved in a wide array of cellular functions probably through regulation of the biogenesis of lipid microdomains at the plasma membrane. May regulate calcium efflux at the endoplasmic reticulum. This chain is Sigma non-opioid intracellular receptor 1 (SIGMAR1), found in Gallus gallus (Chicken).